We begin with the raw amino-acid sequence, 133 residues long: DNA-binding protein inhibitor ID-2-A (133 aa).

The bHLH domain occupies 23–75 (ARSKTPVDDPMSLLYNMNDCYSKLKELVPSIPQNKKVSKMEILQHVIDYILDL). Positions 106–115 (LNTDISILSL) match the Nuclear export signal motif.

As to quaternary structure, heterodimer with other HLH proteins. As to expression, in the embryo, expressed in a range of tissues, with primary expression in the developing pronephros; expressed in the pronephric anlage, and by the swimming tadpole stages expressed robustly in the pronephric tubules and weakly in the pronephric duct. Expressed in the secondary heart field. In the developing nervous system, expressed in the neural crest and in the neural folds during neurula stages, and at stage 20 in the neural tube, ventral mesoderm and mid-hindbrain boundary. By early tailbud stages, expressed in the neural tube, somites and branchial arches. In tadpoles (stage 37/38), expressed in the heart, eye, otic vesicle, somites and branchial arches. Also expressed in migrating muscle cells. Expressed at a low level in limbs, with expression decreasing as limbs develop, but expressed at a high level in blastemas (regenerated limbs), where expression is localized primarily to the blastemal epidermis. Widely expressed in adults with highest expression in the spleen, skin, intestine and brain, and at a much lower level in testis and heart.

The protein resides in the cytoplasm. Its subcellular location is the nucleus. Its function is as follows. Transcriptional regulator (lacking a basic DNA binding domain) which negatively regulates the basic helix-loop-helix (bHLH) transcription factors by forming heterodimers and inhibiting their DNA binding and transcriptional activity. Inhibits the activity of both neurogenic (neurod1/neuroD) and myogenic (myod1/myoD) bHLH factors. May play a role in the regulation of the circadian clock. The chain is DNA-binding protein inhibitor ID-2-A (id2-a) from Xenopus laevis (African clawed frog).